Here is a 129-residue protein sequence, read N- to C-terminus: M-zodatoxin-Lt8j (129 aa).

Residues 1–20 (MKYFVVALALVAAFACIAES) form the signal peptide. Residues 21–60 (KPAESEHELAEVEEENELADLEDAVWLEHLADLSDLEEAR) constitute a propeptide that is removed on maturation.

It belongs to the cationic peptide 06 (cytoinsectotoxin) family. In terms of tissue distribution, expressed by the venom gland.

The protein localises to the secreted. Its function is as follows. Insecticidal, cytolytic and antimicrobial peptide. Forms voltage-dependent, ion-permeable channels in membranes. At high concentration causes cell membrane lysis. This Lachesana tarabaevi (Spider) protein is M-zodatoxin-Lt8j (cit 1-9).